The chain runs to 118 residues: Large ribosomal subunit protein bL20 (118 aa).

The protein belongs to the bacterial ribosomal protein bL20 family.

Functionally, binds directly to 23S ribosomal RNA and is necessary for the in vitro assembly process of the 50S ribosomal subunit. It is not involved in the protein synthesizing functions of that subunit. The protein is Large ribosomal subunit protein bL20 of Proteus mirabilis (strain HI4320).